Consider the following 506-residue polypeptide: Hexokinase-6 (506 aa).

A helical transmembrane segment spans residues 6 to 26 (VVGTAVVVCAAAAAAVGVAVV). A Hexokinase domain is found at 43–497 (RRAAAVIEEV…SGIGAALLAA (455 aa)). A hexokinase small subdomain region spans residues 98 to 236 (TGDEHGLFYA…GLDMKVTALV (139 aa)). ADP contacts are provided by Gly-112, Thr-113, and Asn-114. D-glucose-binding residues include Thr-202, Lys-203, Asn-237, and Asp-238. The tract at residues 237–486 (NDTVGTLAGG…SSVVVKLAND (250 aa)) is hexokinase large subdomain. Thr-261 is an ADP binding site. Residues Asn-264, Glu-292, and Glu-323 each contribute to the D-glucose site. Gly-451 lines the ADP pocket.

It belongs to the hexokinase family. In terms of tissue distribution, expressed in roots, leaves, flowers, immature seeds and endosperm.

Its subcellular location is the plastid. The protein resides in the chloroplast outer membrane. It catalyses the reaction a D-hexose + ATP = a D-hexose 6-phosphate + ADP + H(+). The enzyme catalyses D-fructose + ATP = D-fructose 6-phosphate + ADP + H(+). It carries out the reaction D-glucose + ATP = D-glucose 6-phosphate + ADP + H(+). The protein operates within carbohydrate metabolism; hexose metabolism. It functions in the pathway carbohydrate degradation; glycolysis; D-glyceraldehyde 3-phosphate and glycerone phosphate from D-glucose: step 1/4. In terms of biological role, fructose and glucose phosphorylating enzyme. Functions as a glucose sensor for plant growth and photosynthesis. This Oryza sativa subsp. japonica (Rice) protein is Hexokinase-6 (HXK6).